The following is a 30-amino-acid chain: Thylakoid lumenal 17 kDa protein (30 aa).

The protein localises to the plastid. The protein resides in the chloroplast thylakoid lumen. In Spinacia oleracea (Spinach), this protein is Thylakoid lumenal 17 kDa protein.